The sequence spans 146 residues: Ribosome-binding factor A (146 aa).

The span at 122 to 134 shows a compositional bias: polar residues; sequence QQQFGSAEDVTSN. The interval 122-146 is disordered; the sequence is QQQFGSAEDVTSNDIDEADDTEGKA. The segment covering 135-146 has biased composition (acidic residues); that stretch reads DIDEADDTEGKA.

Belongs to the RbfA family. Monomer. Binds 30S ribosomal subunits, but not 50S ribosomal subunits or 70S ribosomes.

The protein resides in the cytoplasm. Functionally, one of several proteins that assist in the late maturation steps of the functional core of the 30S ribosomal subunit. Associates with free 30S ribosomal subunits (but not with 30S subunits that are part of 70S ribosomes or polysomes). Required for efficient processing of 16S rRNA. May interact with the 5'-terminal helix region of 16S rRNA. This is Ribosome-binding factor A from Shewanella sp. (strain ANA-3).